The chain runs to 177 residues: Large ribosomal subunit protein uL6 (177 aa).

Residues 151 to 177 (KRPPEPYKGKGVKYADEHIRRKEGKKS) are disordered. Residues 152 to 177 (RPPEPYKGKGVKYADEHIRRKEGKKS) are compositionally biased toward basic and acidic residues.

The protein belongs to the universal ribosomal protein uL6 family. As to quaternary structure, part of the 50S ribosomal subunit.

This protein binds to the 23S rRNA, and is important in its secondary structure. It is located near the subunit interface in the base of the L7/L12 stalk, and near the tRNA binding site of the peptidyltransferase center. The polypeptide is Large ribosomal subunit protein uL6 (Fusobacterium nucleatum subsp. nucleatum (strain ATCC 25586 / DSM 15643 / BCRC 10681 / CIP 101130 / JCM 8532 / KCTC 2640 / LMG 13131 / VPI 4355)).